We begin with the raw amino-acid sequence, 112 residues long: 87 kDa annexin-binding protein (112 aa).

Binds annexin.

This chain is 87 kDa annexin-binding protein, found in Physarum polycephalum (Slime mold).